The primary structure comprises 370 residues: Uroporphyrinogen decarboxylase (370 aa).

Residues 29–33 (RQAGR), Asp-79, Tyr-155, Ser-210, and His-342 contribute to the substrate site.

This sequence belongs to the uroporphyrinogen decarboxylase family. In terms of assembly, homodimer.

It is found in the cytoplasm. The catalysed reaction is uroporphyrinogen III + 4 H(+) = coproporphyrinogen III + 4 CO2. It functions in the pathway porphyrin-containing compound metabolism; protoporphyrin-IX biosynthesis; coproporphyrinogen-III from 5-aminolevulinate: step 4/4. In terms of biological role, catalyzes the decarboxylation of four acetate groups of uroporphyrinogen-III to yield coproporphyrinogen-III. This Delftia acidovorans (strain DSM 14801 / SPH-1) protein is Uroporphyrinogen decarboxylase.